We begin with the raw amino-acid sequence, 331 residues long: tRNA-cytidine(32) 2-sulfurtransferase (331 aa).

Residues Ser71–Ser76 carry the PP-loop motif motif. Cys146, Cys149, and Cys237 together coordinate [4Fe-4S] cluster.

This sequence belongs to the TtcA family. Homodimer. Requires Mg(2+) as cofactor. The cofactor is [4Fe-4S] cluster.

It is found in the cytoplasm. The catalysed reaction is cytidine(32) in tRNA + S-sulfanyl-L-cysteinyl-[cysteine desulfurase] + AH2 + ATP = 2-thiocytidine(32) in tRNA + L-cysteinyl-[cysteine desulfurase] + A + AMP + diphosphate + H(+). It functions in the pathway tRNA modification. Catalyzes the ATP-dependent 2-thiolation of cytidine in position 32 of tRNA, to form 2-thiocytidine (s(2)C32). The sulfur atoms are provided by the cysteine/cysteine desulfurase (IscS) system. The polypeptide is tRNA-cytidine(32) 2-sulfurtransferase (Burkholderia multivorans (strain ATCC 17616 / 249)).